A 119-amino-acid polypeptide reads, in one-letter code: MMNAKALYKKKALRDRRKLRIKSKLLGDALRPRVSVFRSNRYFYAQAIDDVKQSTITHIDGRKMGFKNTQEDAKKLGALFAEELKKAGIERAVYDRNGYLYHGVVAAFAESLRENGIAL.

The protein belongs to the universal ribosomal protein uL18 family. As to quaternary structure, part of the 50S ribosomal subunit; part of the 5S rRNA/L5/L18/L25 subcomplex. Contacts the 5S and 23S rRNAs.

This is one of the proteins that bind and probably mediate the attachment of the 5S RNA into the large ribosomal subunit, where it forms part of the central protuberance. This Helicobacter pylori (strain HPAG1) protein is Large ribosomal subunit protein uL18.